The sequence spans 245 residues: Probable phosphatase YcdX (245 aa).

Residues His-7, His-9, His-15, His-40, Glu-73, His-101, His-131, Asp-192, and His-194 each coordinate Zn(2+).

This sequence belongs to the PHP family. In terms of assembly, homotrimer. Zn(2+) is required as a cofactor.

The polypeptide is Probable phosphatase YcdX (Salmonella heidelberg (strain SL476)).